The sequence spans 1002 residues: Vacuolar protein sorting-associated protein 18 homolog (1002 aa).

The residue at position 344 (S344) is a Phosphoserine. A CHCR repeat occupies 650–804; that stretch reads LMAQGSRLEV…DIKGTNDVKK (155 aa). Positions 827 to 880 form a coiled coil; sequence FEKIDNFKEAICDALRDYNQRIQELQREMAETTEQTDRVTAELQQLRQHSLTVE. An RING-type; degenerate zinc finger spans residues 885-924; it reads CEICEMMLLVKPFFIFICGHKFHSDCLEKHVVPLLTKEQC.

This sequence belongs to the VPS18 family. In terms of assembly, component of the class C core vacuole/endosome tethering (CORVET) complex composed of at least Vps8, dor/Vps18, car/Vps33A and Vps16A; unlike in other species, Vps11 is not part of the Drosophila complex. Due to the reduced number of components the Drosophila CORVET complex is often referred to as the miniCORVET complex. Interacts with car/Vps33A. Interacts with ema. Component of the homotypic fusion and vacuole protein sorting (HOPS) complex, composed of Vps16A, car/Vps33A, dor/Vps18, Vps39, Vps11 and lt/Vps41. The tethering complex core made up of Vps16A, car/Vps33A and dor/Vps18 and shared by both HOPS and CORVET, preferentially associates with CORVET-specific Vps8 over HOPS-specific lt/Vps41. Interacts with Syx17 (via SNARE domain); the interaction may involve multiple components of the HOPS complex and may promote assembly of the Syx17-Snap29-Vamp7 trans-SNARE complex.

The protein localises to the early endosome. It localises to the late endosome membrane. Its subcellular location is the lysosome membrane. It is found in the cytoplasmic vesicle. The protein resides in the autophagosome. In terms of biological role, core component of the class C core vacuole/endosome tethering (CORVET) and the homotypic fusion and vacuole protein sorting (HOPS) tethering complexes involved in endo-lysosomal vesicle trafficking and lysosome biogenesis. The CORVET complex facilitates docking and fusion of endosomal vesicles during endosome maturation, acts upstream of HOPS, but is not involved in autophagic flux. The CORVET complex may cooperate with the early endosomal tether Rbsn-5 to mediate endosomal fusion. The HOPS complex facilitates docking and fusion of lysosomes with late endosomes and several other types of vesicles. The HOPS complex is also involved in autophagy and crinophagy (the elimination of unused secretory granules through their fusion with lysosomes). The HOPS complex mediates autophagocitic flux, probably by binding autophagosome-associated Syx17/syntaxin 17, promoting assembly of the trans-SNARE complex and instigating autophagosome-lysosome fusion. Independent of Syx17/syntaxin 17, HOPS is involved in biosynthetic transport to lysosomes and lysosome-related organelles such as eye-pigment granules. Required for endocytic degradation of boss/bride of sevenless and N/Notch in developing ommatidia. Required for autophagocytosis-dependent remodeling of myofibrils and transverse-tubules (T-tubules) during metamorphosis. In larval neuromuscular junctions, essential for endosomal sorting that traffics old or dysfunctional synaptic vesicle proteins through a degradative endolysosomal route. Required to maintain normal levels of rush, which functions in endosome formation and trafficking. This is Vacuolar protein sorting-associated protein 18 homolog from Drosophila melanogaster (Fruit fly).